The following is a 249-amino-acid chain: Probable phosphoglycerate mutase (249 aa).

Substrate is bound by residues 9 to 16 (RHGESTWN), 22 to 23 (TG), Arg-61, 88 to 91 (ERMY), Lys-99, 115 to 116 (RR), and 184 to 185 (GN). The active-site Tele-phosphohistidine intermediate is His-10. Glu-88 acts as the Proton donor/acceptor in catalysis.

This sequence belongs to the phosphoglycerate mutase family. BPG-dependent PGAM subfamily. In terms of assembly, homodimer.

The catalysed reaction is (2R)-2-phosphoglycerate = (2R)-3-phosphoglycerate. The enzyme catalyses (2R)-3-phospho-glyceroyl phosphate = (2R)-2,3-bisphosphoglycerate + H(+). In terms of biological role, catalyzes the interconversion of 2-phosphoglycerate and 3-phosphoglycerate. In Dictyostelium discoideum (Social amoeba), this protein is Probable phosphoglycerate mutase (gpmA).